Consider the following 444-residue polypeptide: Argininosuccinate synthase (444 aa).

ATP contacts are provided by residues 17 to 25 (AFSGGLDTS) and Ala-43. Tyr-99 is an L-citrulline binding site. ATP is bound by residues Gly-129 and Thr-131. 3 residues coordinate L-aspartate: Thr-131, Asn-135, and Asp-136. Asn-135 lines the L-citrulline pocket. Asp-136 provides a ligand contact to ATP. Residues Arg-139 and Ser-192 each coordinate L-citrulline. Asp-194 contacts ATP. The L-citrulline site is built by Thr-201, Glu-203, and Glu-280.

This sequence belongs to the argininosuccinate synthase family. Type 2 subfamily. Homotetramer.

The protein localises to the cytoplasm. It catalyses the reaction L-citrulline + L-aspartate + ATP = 2-(N(omega)-L-arginino)succinate + AMP + diphosphate + H(+). Its pathway is amino-acid biosynthesis; L-arginine biosynthesis; L-arginine from L-ornithine and carbamoyl phosphate: step 2/3. In Delftia acidovorans (strain DSM 14801 / SPH-1), this protein is Argininosuccinate synthase.